The following is a 394-amino-acid chain: Phosphopentomutase (394 aa).

Residues aspartate 14, aspartate 287, histidine 292, aspartate 328, histidine 329, and histidine 340 each coordinate Mn(2+).

The protein belongs to the phosphopentomutase family. Mn(2+) is required as a cofactor.

It is found in the cytoplasm. The catalysed reaction is 2-deoxy-alpha-D-ribose 1-phosphate = 2-deoxy-D-ribose 5-phosphate. It carries out the reaction alpha-D-ribose 1-phosphate = D-ribose 5-phosphate. The protein operates within carbohydrate degradation; 2-deoxy-D-ribose 1-phosphate degradation; D-glyceraldehyde 3-phosphate and acetaldehyde from 2-deoxy-alpha-D-ribose 1-phosphate: step 1/2. In terms of biological role, isomerase that catalyzes the conversion of deoxy-ribose 1-phosphate (dRib-1-P) and ribose 1-phosphate (Rib-1-P) to deoxy-ribose 5-phosphate (dRib-5-P) and ribose 5-phosphate (Rib-5-P), respectively. In Listeria welshimeri serovar 6b (strain ATCC 35897 / DSM 20650 / CCUG 15529 / CIP 8149 / NCTC 11857 / SLCC 5334 / V8), this protein is Phosphopentomutase.